The primary structure comprises 639 residues: Eukaryotic translation initiation factor 2-alpha kinase 2 (639 aa).

The Protein kinase domain occupies 171 to 588; the sequence is FEEYSLLGRG…LEVLNCGLLL (418 aa). Residues 177-185 and K200 contribute to the ATP site; that span reads LGRGGFGSV. Low complexity predominate over residues 298–320; sequence ISTSRKSSYSSTTESSNFENLES. Residues 298-322 are disordered; it reads ISTSRKSSYSSTTESSNFENLESPR. D417 serves as the catalytic Proton acceptor.

The protein belongs to the protein kinase superfamily. Ser/Thr protein kinase family. GCN2 subfamily. Autophosphorylated.

It catalyses the reaction L-seryl-[protein] + ATP = O-phospho-L-seryl-[protein] + ADP + H(+). The catalysed reaction is L-threonyl-[protein] + ATP = O-phospho-L-threonyl-[protein] + ADP + H(+). In terms of biological role, mediates down-regulation of protein synthesis in response to stress conditions by the phosphorylation of the alpha subunit of eIF-2 (tif211) on 'Ser-52'. Protein synthesis is inhibited at the level of initiation. Activity is inhibited in the presence of heme. This chain is Eukaryotic translation initiation factor 2-alpha kinase 2 (hri2), found in Schizosaccharomyces pombe (strain 972 / ATCC 24843) (Fission yeast).